The chain runs to 722 residues: 1,4-alpha-glucan branching enzyme GlgB (722 aa).

The active-site Nucleophile is Asp401. The active-site Proton donor is the Glu454.

This sequence belongs to the glycosyl hydrolase 13 family. GlgB subfamily. Monomer.

It catalyses the reaction Transfers a segment of a (1-&gt;4)-alpha-D-glucan chain to a primary hydroxy group in a similar glucan chain.. The protein operates within glycan biosynthesis; glycogen biosynthesis. Its function is as follows. Catalyzes the formation of the alpha-1,6-glucosidic linkages in glycogen by scission of a 1,4-alpha-linked oligosaccharide from growing alpha-1,4-glucan chains and the subsequent attachment of the oligosaccharide to the alpha-1,6 position. This chain is 1,4-alpha-glucan branching enzyme GlgB, found in Rubrobacter xylanophilus (strain DSM 9941 / JCM 11954 / NBRC 16129 / PRD-1).